The chain runs to 242 residues: uncharacterized protein (242 aa).

It to E.coli MazG and to plasmid pIP1100 erythromycin esterase.

This is an uncharacterized protein from Streptomyces cacaoi.